Reading from the N-terminus, the 247-residue chain is Uridylate kinase (247 aa).

18-21 (KLSG) serves as a coordination point for ATP. Gly60 serves as a coordination point for UMP. Positions 61 and 65 each coordinate ATP. Residues Asp80 and 141-148 (TGNPFFTT) each bind UMP. Residues Thr168, Tyr174, and Asp177 each contribute to the ATP site.

It belongs to the UMP kinase family. As to quaternary structure, homohexamer.

It is found in the cytoplasm. The catalysed reaction is UMP + ATP = UDP + ADP. The protein operates within pyrimidine metabolism; CTP biosynthesis via de novo pathway; UDP from UMP (UMPK route): step 1/1. With respect to regulation, inhibited by UTP. Its function is as follows. Catalyzes the reversible phosphorylation of UMP to UDP. The sequence is that of Uridylate kinase from Pseudomonas fluorescens (strain ATCC BAA-477 / NRRL B-23932 / Pf-5).